Reading from the N-terminus, the 702-residue chain is Pentatricopeptide repeat-containing protein At4g16390, chloroplastic (702 aa).

Residues 1 to 53 constitute a chloroplast transit peptide; that stretch reads MSFHHLCSSPSSLLHDPLPLCNLLSVYPKSTPRSFLSSYNPNSSHFHSRNLLQ. PPR repeat units follow at residues 174–208, 209–243, 244–278, 279–313, 314–348, 349–383, 384–414, 420–454, and 455–489; these read EVILYNVTMKVFRKSKDLEKSEKLFDEMLERGIKP, DNATFTTIISCARQNGVPKRAVEWFEKMSSFGCEP, DNVTMAAMIDAYGRAGNVDMALSLYDRARTEKWRI, DAVTFSTLIRIYGVSGNYDGCLNIYEEMKALGVKP, NLVIYNRLIDSMGRAKRPWQAKIIYKDLITNGFTP, NWSTYAALVRAYGRARYGDDALAIYREMKEKGLSL, TVILYNTLLSMCADNRYVDEAFEIFQDMKNC, DSWTFSSLITVYACSGRVSEAEAALLQMREAGFEP, and TLFVLTSVIQCYGKAKQVDDVVRTFDQVLELGITP. The region spanning 603–688 is the Smr domain; sequence LHLKSLSLGA…WFLTTSVAAK (86 aa).

The protein belongs to the PPR family. P subfamily. As to expression, expressed in leaves and flowers and at lower levels in stems and flower buds.

It is found in the plastid. Its subcellular location is the chloroplast. Functionally, involved in chloroplast RNA processing. Can bind RNA. Involved in chloroplast development. Involved in chloroplast ribosomal RNA (rRNA) processing and/or translation. Required for FtsH-mediated chloroplast biogenesis. Involved in translation and accumulation of chloroplast ATP synthase subunits. The polypeptide is Pentatricopeptide repeat-containing protein At4g16390, chloroplastic (Arabidopsis thaliana (Mouse-ear cress)).